The primary structure comprises 218 residues: Ras-related protein RABE1e (218 aa).

22–29 (GDSGVGKS) provides a ligand contact to GTP. The Effector region motif lies at 44 to 52 (FITTIGIDF). GTP contacts are provided by residues 70–74 (DTAGQ), 128–131 (NKAD), and 159–160 (SA). Residues 182–218 (TESDTKAEPQGIKITKQDANKASSSSTNEKSACCSYV) form a disordered region. The span at 201-211 (NKASSSSTNEK) shows a compositional bias: polar residues. Residues cysteine 214 and cysteine 215 are each lipidated (S-geranylgeranyl cysteine).

It belongs to the small GTPase superfamily. Rab family. As to quaternary structure, interacts with PI5K2.

The protein localises to the golgi apparatus membrane. It localises to the cell membrane. Functionally, involved in membrane trafficking from the Golgi to the plasma membrane. This is Ras-related protein RABE1e (RABE1E) from Arabidopsis thaliana (Mouse-ear cress).